Consider the following 391-residue polypeptide: Na(+)/H(+) antiporter NhaA 1 (391 aa).

11 helical membrane-spanning segments follow: residues 19-39 (FLAS…AALI), 56-76 (VWLG…IFFL), 98-118 (ALPG…YIAI), 128-148 (GWAI…SLLG), 157-177 (VFLA…IAFF), 180-200 (SGLN…LIAL), 208-228 (LLPY…SGVH), 264-284 (VAFA…LSGI), 297-317 (VALG…VLAI), 335-355 (GVAI…NLAF), and 364-384 (EVKV…ILLL).

Belongs to the NhaA Na(+)/H(+) (TC 2.A.33) antiporter family.

Its subcellular location is the cell inner membrane. It catalyses the reaction Na(+)(in) + 2 H(+)(out) = Na(+)(out) + 2 H(+)(in). In terms of biological role, na(+)/H(+) antiporter that extrudes sodium in exchange for external protons. In Pseudomonas savastanoi pv. phaseolicola (strain 1448A / Race 6) (Pseudomonas syringae pv. phaseolicola (strain 1448A / Race 6)), this protein is Na(+)/H(+) antiporter NhaA 1.